The chain runs to 1128 residues: Apoptosis-stimulating of p53 protein 2 (1128 aa).

Disordered stretches follow at residues 86 to 106 (PGRD…RNGV) and 322 to 341 (KENL…ASAP). Residues 322 to 339 (KENLPVSSDGNLPQQAAS) show a composition bias toward polar residues. The tract at residues 332–348 (NLPQQAASAPSRVAAVG) is interaction with APPBP1. Ser480 is modified (phosphoserine). 2 disordered regions span residues 494–598 (NVAK…LPPF) and 655–706 (NQQQ…LPFL). Positions 528–537 (GSSQQLSTVV) are enriched in polar residues. Phosphoserine occurs at positions 556, 569, 572, and 576. The span at 558-575 (SIPSVGQDQTLSPGSKQE) shows a compositional bias: polar residues. Polar residues predominate over residues 655–670 (NQQQHPENIYSNSQGK). Phosphoserine is present on residues Ser698, Ser714, and Ser737. Disordered regions lie at residues 724–748 (KLSN…NGPN) and 802–909 (SLVP…TNLR). Residues 840–849 (NSPNLQNNPE) are compositionally biased toward low complexity. The short motif at 866–875 (YPPYPPPPYP) is the SH3-binding element. Residues 867 to 876 (PPYPPPPYPS) are compositionally biased toward pro residues. Positions 876 to 1128 (SGEPEGPGED…RIKPRQRSLA (253 aa)) are mediates interaction with APC2. ANK repeat units lie at residues 926–957 (PLAL…LPND), 958–990 (EGIT…AADS), 991–1024 (DGWT…MTYS), and 1025–1067 (DMQT…ALWD). The SH3 domain maps to 1057 to 1119 (MNKGVIYALW…PRNLLGLYPR (63 aa)).

Belongs to the ASPP family. As to quaternary structure, interacts with P53/TP53; the interaction promotes pro-apoptotic activity. Interacts with BCL2. Interacts with protein phosphatase 1. Interacts with RELA NF-kappa-B subunit. This interaction probably prevents the activation of apoptosis, possibly by preventing its interaction with TP53. Interacts with APC2 and NAE1. Interacts with DDX42 (via the C-terminus); the interaction is not inhibited by TP53BP2 ubiquitination and is independent of p53/TP53. As to expression, widely expressed. Expressed in spleen, thymus, prostate, testis, ovary, small intestine, colon and peripheral blood leukocyte. Reduced expression in breast carcinomas expressing a wild-type TP53 protein. Overexpressed in lung cancer cell lines.

It is found in the cytoplasm. The protein resides in the perinuclear region. The protein localises to the nucleus. Regulator that plays a central role in regulation of apoptosis and cell growth via its interactions with proteins such as TP53. Regulates TP53 by enhancing the DNA binding and transactivation function of TP53 on the promoters of proapoptotic genes in vivo. Inhibits the ability of NAE1 to conjugate NEDD8 to CUL1, and thereby decreases NAE1 ability to induce apoptosis. Impedes cell cycle progression at G2/M. Its apoptosis-stimulating activity is inhibited by its interaction with DDX42. This chain is Apoptosis-stimulating of p53 protein 2 (TP53BP2), found in Homo sapiens (Human).